A 506-amino-acid polypeptide reads, in one-letter code: Lysine--tRNA ligase (506 aa).

Mg(2+) contacts are provided by E416 and E423.

This sequence belongs to the class-II aminoacyl-tRNA synthetase family. Homodimer. Mg(2+) is required as a cofactor.

The protein resides in the cytoplasm. The catalysed reaction is tRNA(Lys) + L-lysine + ATP = L-lysyl-tRNA(Lys) + AMP + diphosphate. In Xylella fastidiosa (strain M12), this protein is Lysine--tRNA ligase.